The following is a 560-amino-acid chain: NAD(P)H-quinone oxidoreductase chain 4-3 (560 aa).

The next 14 helical transmembrane spans lie at 5–25 (FPWLTAIILLPLVASAFIPLL), 35–55 (WYALGVGIADFVLMCYTFWHH), 86–106 (ISMPLVLLAGFVTTLSMLAAW), 114–134 (LFYFLMLVLYSAQIGVFVAQD), 135–155 (LLLFFIMWELELVPVYLLVSI), 168–188 (FLLYTAAASIFILIAGLAMAL), 208–228 (ALELLLYAGLLIAFGVKLAIF), 242–262 (SAPVSMILAGVLLKMGGYGLI), 273–293 (HIYFAPVLATLGVINIIYGGL), 310–330 (VSHMGFVLLGIASFTDVGVSG), 331–351 (AMLQMLSHGLIAAVLFFLAGV), 374–394 (VFALFTAGTMASLALPGMSGF), 417–437 (VMVFLAAVGVILTPIYLLSML), and 488–508 (VFIAVSFLVLIIGVGVYPKIA).

The protein belongs to the complex I subunit 4 family.

It is found in the cellular thylakoid membrane. The catalysed reaction is a plastoquinone + NADH + (n+1) H(+)(in) = a plastoquinol + NAD(+) + n H(+)(out). The enzyme catalyses a plastoquinone + NADPH + (n+1) H(+)(in) = a plastoquinol + NADP(+) + n H(+)(out). Functionally, NDH-1 shuttles electrons from NAD(P)H, via FMN and iron-sulfur (Fe-S) centers, to quinones in the respiratory chain. The immediate electron acceptor for the enzyme in this species is believed to be plastoquinone. Couples the redox reaction to proton translocation (for every two electrons transferred, four hydrogen ions are translocated across the cytoplasmic membrane), and thus conserves the redox energy in a proton gradient. This Nostoc sp. (strain PCC 7120 / SAG 25.82 / UTEX 2576) protein is NAD(P)H-quinone oxidoreductase chain 4-3 (ndhD3).